Reading from the N-terminus, the 291-residue chain is MLQGSLVALITPMNQDGSIHYEQLRDLIDWHIENGTDGIVAVGTTGESATLSVEEHTAVIEAVVKHVAKRVPVIAGTGANNTVEAIALSQAAEKAGADYTLSVVPYYNKPSQEGMYRHFKAVAEAAAIPMILYNVPGRTVVSMNNETILRLAEIPNIVGVKEASGNIGSNIELINRAPEGFFVLSGDDHTALPFMLCGGHGVITVAANAAPKLFADMCRAALQGDIALARELNDRLIPIYDTMFCEPSPAAPKWAVSALGRCEPHVRLPLVPLTEGGQAKVRAALKASGQL.

Pyruvate is bound at residue Thr-45. The active-site Proton donor/acceptor is Tyr-133. Residue Lys-161 is the Schiff-base intermediate with substrate of the active site. Ile-203 is a pyruvate binding site.

This sequence belongs to the DapA family. Homotetramer; dimer of dimers.

Its subcellular location is the cytoplasm. The enzyme catalyses L-aspartate 4-semialdehyde + pyruvate = (2S,4S)-4-hydroxy-2,3,4,5-tetrahydrodipicolinate + H2O + H(+). The protein operates within amino-acid biosynthesis; L-lysine biosynthesis via DAP pathway; (S)-tetrahydrodipicolinate from L-aspartate: step 3/4. Functionally, catalyzes the condensation of (S)-aspartate-beta-semialdehyde [(S)-ASA] and pyruvate to 4-hydroxy-tetrahydrodipicolinate (HTPA). This chain is 4-hydroxy-tetrahydrodipicolinate synthase, found in Neisseria meningitidis serogroup C (strain 053442).